A 675-amino-acid chain; its full sequence is Putative exonuclease GOR (675 aa).

The segment covering 66–79 (VAKEAAPEASRHLG) has biased composition (basic and acidic residues). Disordered regions lie at residues 66–90 (VAKEAAPEASRHLGAEQSPAGAPEG) and 225–263 (AKRTRVASSSQRSRGSKVGRQPGKTRNRSGMACKTTATT). The GOR1-125 epitope stretch occupies residues 358–483 (MPGLSRAALY…VRDGRKESLD (126 aa)).

This sequence belongs to the REXO1/REXO3 family.

It localises to the cytoplasm. The protein resides in the nucleus. The protein is Putative exonuclease GOR (REXO1L1P) of Homo sapiens (Human).